Reading from the N-terminus, the 516-residue chain is Probable serine/threonine-protein kinase WNK3 (516 aa).

The region spanning Gly-22–Leu-280 is the Protein kinase domain. ATP-binding positions include Thr-102–Phe-105 and Lys-152. Asp-169 (proton acceptor) is an active-site residue. Residues Ser-426–Gln-451 form a disordered region. Residues Arg-442–Gln-451 show a composition bias toward polar residues. The stretch at Glu-457–Phe-490 forms a coiled coil.

This sequence belongs to the protein kinase superfamily. Ser/Thr protein kinase family. WNK subfamily.

It catalyses the reaction L-seryl-[protein] + ATP = O-phospho-L-seryl-[protein] + ADP + H(+). The enzyme catalyses L-threonyl-[protein] + ATP = O-phospho-L-threonyl-[protein] + ADP + H(+). In terms of biological role, may regulate flowering time by modulating the photoperiod pathway. The polypeptide is Probable serine/threonine-protein kinase WNK3 (WNK3) (Arabidopsis thaliana (Mouse-ear cress)).